The following is a 344-amino-acid chain: Heat-inducible transcription repressor HrcA (344 aa).

It belongs to the HrcA family.

Negative regulator of class I heat shock genes (grpE-dnaK-dnaJ and groELS operons). Prevents heat-shock induction of these operons. The sequence is that of Heat-inducible transcription repressor HrcA from Streptococcus equi subsp. zooepidemicus (strain MGCS10565).